Consider the following 148-residue polypeptide: Deoxyuridine 5'-triphosphate nucleotidohydrolase (148 aa).

Substrate is bound by residues 68–70, Asn81, 85–87, and Lys95; these read RSG and TID.

Belongs to the dUTPase family. The cofactor is Mg(2+).

It carries out the reaction dUTP + H2O = dUMP + diphosphate + H(+). It functions in the pathway pyrimidine metabolism; dUMP biosynthesis; dUMP from dCTP (dUTP route): step 2/2. Its function is as follows. This enzyme is involved in nucleotide metabolism: it produces dUMP, the immediate precursor of thymidine nucleotides and it decreases the intracellular concentration of dUTP so that uracil cannot be incorporated into DNA. The sequence is that of Deoxyuridine 5'-triphosphate nucleotidohydrolase from Rickettsia massiliae (strain Mtu5).